Consider the following 377-residue polypeptide: Succinyl-diaminopimelate desuccinylase (377 aa).

Histidine 66 provides a ligand contact to Zn(2+). Aspartate 68 is an active-site residue. Residue aspartate 99 participates in Zn(2+) binding. The active-site Proton acceptor is the glutamate 133. Positions 134, 162, and 348 each coordinate Zn(2+).

This sequence belongs to the peptidase M20A family. DapE subfamily. As to quaternary structure, homodimer. It depends on Zn(2+) as a cofactor. The cofactor is Co(2+).

It catalyses the reaction N-succinyl-(2S,6S)-2,6-diaminopimelate + H2O = (2S,6S)-2,6-diaminopimelate + succinate. It functions in the pathway amino-acid biosynthesis; L-lysine biosynthesis via DAP pathway; LL-2,6-diaminopimelate from (S)-tetrahydrodipicolinate (succinylase route): step 3/3. Catalyzes the hydrolysis of N-succinyl-L,L-diaminopimelic acid (SDAP), forming succinate and LL-2,6-diaminopimelate (DAP), an intermediate involved in the bacterial biosynthesis of lysine and meso-diaminopimelic acid, an essential component of bacterial cell walls. The chain is Succinyl-diaminopimelate desuccinylase from Methylococcus capsulatus (strain ATCC 33009 / NCIMB 11132 / Bath).